Here is a 252-residue protein sequence, read N- to C-terminus: 3-dehydroquinate dehydratase (252 aa).

3-dehydroquinate-binding positions include serine 21, 46–48, and arginine 82; that span reads EWR. Histidine 143 (proton donor/acceptor) is an active-site residue. The active-site Schiff-base intermediate with substrate is the lysine 170. 3-dehydroquinate is bound by residues arginine 213, serine 232, and glutamine 236.

The protein belongs to the type-I 3-dehydroquinase family. Homodimer.

The enzyme catalyses 3-dehydroquinate = 3-dehydroshikimate + H2O. It functions in the pathway metabolic intermediate biosynthesis; chorismate biosynthesis; chorismate from D-erythrose 4-phosphate and phosphoenolpyruvate: step 3/7. Functionally, involved in the third step of the chorismate pathway, which leads to the biosynthesis of aromatic amino acids. Catalyzes the cis-dehydration of 3-dehydroquinate (DHQ) and introduces the first double bond of the aromatic ring to yield 3-dehydroshikimate. In Escherichia coli (strain K12 / MC4100 / BW2952), this protein is 3-dehydroquinate dehydratase.